The primary structure comprises 443 residues: 3-isopropylmalate dehydratase large subunit (443 aa).

Residues Cys347, Cys407, and Cys410 each coordinate [4Fe-4S] cluster.

This sequence belongs to the aconitase/IPM isomerase family. LeuC type 1 subfamily. Heterodimer of LeuC and LeuD. [4Fe-4S] cluster is required as a cofactor.

The enzyme catalyses (2R,3S)-3-isopropylmalate = (2S)-2-isopropylmalate. Its pathway is amino-acid biosynthesis; L-leucine biosynthesis; L-leucine from 3-methyl-2-oxobutanoate: step 2/4. In terms of biological role, catalyzes the isomerization between 2-isopropylmalate and 3-isopropylmalate, via the formation of 2-isopropylmaleate. This is 3-isopropylmalate dehydratase large subunit from Buchnera aphidicola subsp. Uroleucon aeneum.